Here is a 511-residue protein sequence, read N- to C-terminus: Apolipoprotein N-acyltransferase (511 aa).

Transmembrane regions (helical) follow at residues 24–44 (LALA…LLYL), 58–78 (GWWY…VSIH), 90–110 (FLML…AWLW), 125–145 (LAFA…LTGF), 163–183 (VPVG…ALLV), and 192–212 (GASL…GLYL). In terms of domain architecture, CN hydrolase spans 230–470 (IQGNIAQELK…QGILRGEVIP (241 aa)). Glutamate 269 acts as the Proton acceptor in catalysis. Lysine 330 is an active-site residue. The active-site Nucleophile is the cysteine 382. The chain crosses the membrane as a helical span at residues 482–502 (VWPLAGLAGVLLLWALLGRQL).

Belongs to the CN hydrolase family. Apolipoprotein N-acyltransferase subfamily.

It is found in the cell inner membrane. It catalyses the reaction N-terminal S-1,2-diacyl-sn-glyceryl-L-cysteinyl-[lipoprotein] + a glycerophospholipid = N-acyl-S-1,2-diacyl-sn-glyceryl-L-cysteinyl-[lipoprotein] + a 2-acyl-sn-glycero-3-phospholipid + H(+). The protein operates within protein modification; lipoprotein biosynthesis (N-acyl transfer). Catalyzes the phospholipid dependent N-acylation of the N-terminal cysteine of apolipoprotein, the last step in lipoprotein maturation. The polypeptide is Apolipoprotein N-acyltransferase (Pseudomonas aeruginosa (strain UCBPP-PA14)).